The sequence spans 106 residues: Putative defensin-like protein 224 (106 aa).

Residues 1 to 23 (MKTLSLFFTLVILISSCVSNLMA) form the signal peptide. Intrachain disulfides connect Cys60–Cys78, Cys64–Cys84, and Cys68–Cys86.

It belongs to the DEFL family.

The protein resides in the secreted. The polypeptide is Putative defensin-like protein 224 (Arabidopsis thaliana (Mouse-ear cress)).